The sequence spans 117 residues: UPF0102 protein Rsph17029_0461 (117 aa).

This sequence belongs to the UPF0102 family.

This is UPF0102 protein Rsph17029_0461 from Cereibacter sphaeroides (strain ATCC 17029 / ATH 2.4.9) (Rhodobacter sphaeroides).